Consider the following 439-residue polypeptide: MSSSREMRDLPLVRLPEPYKTKYELYQASSGPNGRIFQLRLSSDQNNGAISPPDLLHHQMLYFSELIPGPQATLPAESDNTAWARACRSLVSFVTWDGESAPTVGQIWMLVYAIFSLRPSEESFRLSLSGAQKDQLYAECNAAGLSTRFPTPVQPQPLYTTIEDVVVSRAAFWQGAGSPLGTRPAWLVPSISGSARKLPSEYPAFPLQYTLTSQLTNRPVHTQHPVRPAKPARGAPIYSRYIPHLDEFFAMDHLDYTNETHLQLFHTWQNDPRVAVNWKEAGTLDQHREYLRKIDEDPHQIAVLARFNNTYFAYFEIYWAKEDHMGTYYPALDWDRGRHSLVGDARFRGPHRAMAWWTSLIHYIFLDEPRTTCVVGEPKATNGPVLGYDAAHGFHVHKWGDLPHKRSAMVRCERVRFFEVVNFGNVTSNGTAKPSKSKL.

The PTS1-type peroxisomal targeting signal signature appears at 437 to 439 (SKL).

It belongs to the lysine N-acyltransferase mbtK family.

The protein resides in the peroxisome. The protein operates within siderophore biosynthesis. Its function is as follows. Hydroxyornithine transacylase; part of the gene cluster that mediates the biosynthesis of hydroxamate-containing siderophores that play a critical role in virulence via intracellular iron acquisition during macrophage infection. In Ajellomyces capsulatus (Darling's disease fungus), this protein is Hydroxyornithine transacylase SID3.